Consider the following 209-residue polypeptide: Heat shock protein beta-1 (209 aa).

R12 is modified (omega-N-methylarginine). S13 bears the Phosphoserine mark. S15 carries the post-translational modification Phosphoserine; by MAPKAPK2 and MAPKAPK3. S27 is modified (phosphoserine). Residues 74–209 (APAYSRALSR…AGKSEQSGAK (136 aa)) are interaction with TGFB1I1. The sHSP domain maps to 80-188 (ALSRQLSSGV…QSAEITIPVT (109 aa)). Phosphoserine; by MAPKAPK2, MAPKAPK3 and MAPKAPK5 is present on residues S82 and S86. 3 positions are modified to phosphoserine: S87, S90, and S102. K127 is modified (N6-acetyllysine). Residue T178 is modified to Phosphothreonine. Residues S180 and S203 each carry the phosphoserine modification.

This sequence belongs to the small heat shock protein (HSP20) family. In terms of assembly, homooligomer. Homodimer; becomes monomeric upon activation. Heterooligomer; with HSPB6. Associates with alpha- and beta-tubulin. Interacts with TGFB1I1. Interacts with CRYAB. Interacts with HSPB8. Interacts with HSPBAP1. Post-translationally, phosphorylated upon exposure to protein kinase C activators and heat shock. Phosphorylation by MAPKAPK2 and MAPKAPK3 in response to stress dissociates HSPB1 from large small heat-shock protein (sHsps) oligomers and impairs its chaperone activity and ability to protect against oxidative stress effectively. Phosphorylation by MAPKAPK5 in response to PKA stimulation induces F-actin rearrangement.

The protein localises to the cytoplasm. It localises to the nucleus. Its subcellular location is the cytoskeleton. It is found in the spindle. In terms of biological role, small heat shock protein which functions as a molecular chaperone probably maintaining denatured proteins in a folding-competent state. Plays a role in stress resistance and actin organization. Through its molecular chaperone activity may regulate numerous biological processes including the phosphorylation and the axonal transport of neurofilament proteins. The chain is Heat shock protein beta-1 (HSPB1) from Canis lupus familiaris (Dog).